The chain runs to 371 residues: Leucine-rich repeat-containing protein 58 (371 aa).

Residue Ser-24 is modified to Phosphoserine. LRR repeat units lie at residues 45-66 (ALLR…LGSG), 69-91 (HLQL…LALR), 92-113 (GLRT…PKGL), 121-143 (SLQV…LELR), 144-166 (ALQT…ENLQ), 167-189 (SLEC…GNLP), 190-211 (SLNY…LSQL), 213-234 (SLRS…ILNL), and 236-256 (HLEE…RDLT). Positions 340–351 (SSASHSSTSQSE) are enriched in low complexity. The interval 340–361 (SSASHSSTSQSESDSEDEASVA) is disordered.

The protein is Leucine-rich repeat-containing protein 58 (LRRC58) of Homo sapiens (Human).